A 148-amino-acid polypeptide reads, in one-letter code: MQLSRALYRNLNTRHWNRRIWEVGYRGPILPQQKATGRPDYPVSANRVNILRERLAREQIVMNLLTRPYSTAYAELTYLETEKNVKSLEELRAKEYKKLDEQRMPGKPKNTEGSKSTIRKKANVGNLLHTHTTVEDSLAGLAARKRWD.

Basic and acidic residues predominate over residues 97–112 (KKLDEQRMPGKPKNTE). Residues 97 to 126 (KKLDEQRMPGKPKNTEGSKSTIRKKANVGN) form a disordered region.

This is an uncharacterized protein from Caenorhabditis elegans.